A 276-amino-acid polypeptide reads, in one-letter code: NADH-cytochrome b5 reductase 2 (276 aa).

The region spanning 15–127 (EAKYPLPLIE…RGPTGRLFYN (113 aa)) is the FAD-binding FR-type domain. At Lys17 the chain carries N6-acetyllysine. Tyr18 carries the phosphotyrosine modification. FAD contacts are provided by residues 107–137 (ENMKIGDTILFRGPTGRLFYNEPGTLLIKAN) and 146–181 (LVHHLGMIAGGTGITPMLQLIRHITKDTSDETRMSL).

It belongs to the flavoprotein pyridine nucleotide cytochrome reductase family. FAD serves as cofactor.

It catalyses the reaction 2 Fe(III)-[cytochrome b5] + NADH = 2 Fe(II)-[cytochrome b5] + NAD(+) + H(+). Its function is as follows. NADH-cytochrome b5 reductases are involved in desaturation and elongation of fatty acids, cholesterol biosynthesis, drug metabolism, and, in erythrocyte, methemoglobin reduction. Responsible for NADH-dependent lucigenin chemiluminescence in spermatozoa by reducing both lucigenin and 2-[4-iodophenyl]-3-[4-nitrophenyl]-5-[2,4-disulfophenyl]-2H tetrazolium monosodium salt (WST-1). This Mus musculus (Mouse) protein is NADH-cytochrome b5 reductase 2 (Cyb5r2).